A 600-amino-acid chain; its full sequence is CDK5RAP1-like protein (600 aa).

A disordered region spans residues 45-66 (LSSAAHPPPPPPRRLARSGPSR). In terms of domain architecture, MTTase N-terminal spans 93-222 (GRIYHETYGC…LPRLLQEVDY (130 aa)). [4Fe-4S] cluster contacts are provided by Cys102, Cys139, Cys185, Cys260, Cys264, and Cys267. Positions 246–501 (SDNSVTAFVS…ISTFRETTAK (256 aa)) constitute a Radical SAM core domain. Positions 504 to 580 (DSQVGTVQLV…TASLSGDVIA (77 aa)) constitute a TRAM domain.

This sequence belongs to the methylthiotransferase family. MiaB subfamily. Requires [4Fe-4S] cluster as cofactor.

Functionally, potential regulator of CDK5 activity. The chain is CDK5RAP1-like protein from Oryza sativa subsp. japonica (Rice).